The primary structure comprises 105 residues: Cuticle protein AM1159 (105 aa).

Residues 16 to 81 enclose the Chitin-binding type R&amp;R domain; that stretch reads DGNFNYNFQT…PESPLLPVGP (66 aa). The interval 25–46 is disordered; the sequence is TSNGIEDTKTGTPGSQGQSNMQ.

Arthrodial membrane.

The chain is Cuticle protein AM1159 from Cancer pagurus (Rock crab).